A 366-amino-acid chain; its full sequence is G-protein coupled receptor 183 (366 aa).

The Extracellular segment spans residues 1-37 (MQVMRTFNQPPTSSHPTPTLNDSDTCITLYNHRGYAR). N-linked (GlcNAc...) asparagine glycosylation occurs at N21. The helical transmembrane segment at 38–63 (VLMPLFYCIVFFVGLLGNALAFHIIR) threads the bilayer. Residues 64–83 (PNVKKINSTTLYSANLVISD) lie on the Cytoplasmic side of the membrane. A helical transmembrane segment spans residues 84–101 (ILFTLSLPLRIIYYALGF). At 102 to 111 (HWPLGETLCK) the chain is on the extracellular side. A disulfide bond links C110 and C188. The helical transmembrane segment at 112–133 (IVGLIFYINTYAGVNFMTCLSV) threads the bilayer. The Cytoplasmic portion of the chain corresponds to 134-155 (DRFIAVVLPLRFARFRKVSNVR). Residues 156 to 174 (YICVGVWLLVLMQTLPLLS) traverse the membrane as a helical segment. At 175 to 199 (MPMTNEEPDGFITCMEYPNFEPVPN) the chain is on the extracellular side. The chain crosses the membrane as a helical span at residues 200 to 222 (ISYILIGAVFLGYGVPVVTILVC). Residues 223–248 (YSILCCKLRLAAKANQLTDKSGRSQK) are Cytoplasmic-facing. Residues 249 to 272 (AIGVICCVSLVFVVCFSPYHIDLL) form a helical membrane-spanning segment. The Extracellular portion of the chain corresponds to 273–292 (QYMIRKLIYTPDCAELTAFQ). Residues 293 to 317 (ISLHFTVCLMNLNSCLDPFIYFFAC) form a helical membrane-spanning segment. Residues 318–366 (KGYKTKVLKILKRQVSVSFSSAARTLPEGLSRDISDGNKIHLNSTRHKE) lie on the Cytoplasmic side of the membrane.

It belongs to the G-protein coupled receptor 1 family.

The protein localises to the cell membrane. Functionally, G-protein coupled receptor expressed in lymphocytes that acts as a chemotactic receptor for B-cells, T-cells, splenic dendritic cells, monocytes/macrophages and astrocytes. Receptor for oxysterol 7-alpha,25-dihydroxycholesterol (7-alpha,25-OHC) and other related oxysterols. Mediates cell positioning and movement of a number of cells by binding the 7-alpha,25-OHC ligand that forms a chemotactic gradient. Binding of 7-alpha,25-OHC mediates the correct localization of B-cells during humoral immune responses. This Salmo salar (Atlantic salmon) protein is G-protein coupled receptor 183 (gpr183).